A 357-amino-acid polypeptide reads, in one-letter code: Glucose-6-phosphatase catalytic subunit 1 (357 aa).

The Lumenal segment spans residues 1-28 (MEERMNVLHDFGIQSTRYLQVNYEDSQD). A helical membrane pass occupies residues 29–49 (WFVLVSVIADLRNAFYVLFPI). At 50-60 (WFHIQETVGIN) the chain is on the cytoplasmic side. A helical membrane pass occupies residues 61–81 (LLWVAVVGDWFNLVFKWILFG). The Lumenal portion of the chain corresponds to 82–117 (QRPYWWVLDTDYYSNSSVPLIKQFPVTCETGPGSPS). Arginine 83 is a substrate binding site. An N-linked (GlcNAc...) asparagine glycan is attached at asparagine 96. The helical transmembrane segment at 118-138 (GHAMGTAGVYYVMVTSTLAIF) threads the bilayer. The active-site Proton donor is histidine 119. The Cytoplasmic portion of the chain corresponds to 139–147 (RGKKKSTYG). A helical transmembrane segment spans residues 148-168 (FRCLNVVLWLGYWAVQLNVCL). Over 169 to 170 (SR) the chain is Lumenal. Arginine 170 provides a ligand contact to substrate. The helical transmembrane segment at 171–191 (IYLAAHFPHQVVAGVLSGIAV) threads the bilayer. Residue histidine 176 is the Nucleophile of the active site. At 192–211 (AETFSHIRGIYNASLQRYCL) the chain is on the cytoplasmic side. Residues 212–232 (ITFFLFGFALGFYLLLKGLGV) traverse the membrane as a helical segment. Residues 233 to 254 (DLLWTLEKAKRWCERPEWVHLD) lie on the Lumenal side of the membrane. A helical membrane pass occupies residues 255 to 275 (TTPFASLFKNLGTLLGLGLAL). Residues 276-291 (NSSMYRKSCKGELRKS) lie on the Cytoplasmic side of the membrane. The helical transmembrane segment at 292 to 312 (LPFRLACIVASLGLLHLFDSL) threads the bilayer. Residues 313 to 320 (KPPSQIES) are Lumenal-facing. The chain crosses the membrane as a helical span at residues 321 to 341 (IFYILSFCKSATVPFASVSLI). Residues 342–357 (PYCLARLLGQTHKKSL) lie on the Cytoplasmic side of the membrane. Positions 354-357 (KKSL) match the Prevents secretion from ER motif.

This sequence belongs to the glucose-6-phosphatase family.

It is found in the endoplasmic reticulum membrane. The enzyme catalyses D-glucose 6-phosphate + H2O = D-glucose + phosphate. Its pathway is carbohydrate biosynthesis; gluconeogenesis. Its function is as follows. Hydrolyzes glucose-6-phosphate to glucose in the endoplasmic reticulum. Forms with the glucose-6-phosphate transporter (SLC37A4/G6PT) the complex responsible for glucose production in the terminal step of glycogenolysis and gluconeogenesis. Hence, it is the key enzyme in homeostatic regulation of blood glucose levels. This is Glucose-6-phosphatase catalytic subunit 1 (G6pc1) from Rattus norvegicus (Rat).